A 353-amino-acid chain; its full sequence is 3-isopropylmalate dehydrogenase (353 aa).

Position 75–88 (75–88 (GPKWENLPHEHKPE)) interacts with NAD(+). Substrate contacts are provided by R95, R105, R133, and D219. The Mg(2+) site is built by D219, D243, and D247. An NAD(+)-binding site is contributed by 276–288 (GSAPDIAGKNIAN).

The protein belongs to the isocitrate and isopropylmalate dehydrogenases family. LeuB type 1 subfamily. Homodimer. Requires Mg(2+) as cofactor. The cofactor is Mn(2+).

The protein resides in the cytoplasm. It carries out the reaction (2R,3S)-3-isopropylmalate + NAD(+) = 4-methyl-2-oxopentanoate + CO2 + NADH. The protein operates within amino-acid biosynthesis; L-leucine biosynthesis; L-leucine from 3-methyl-2-oxobutanoate: step 3/4. Functionally, catalyzes the oxidation of 3-carboxy-2-hydroxy-4-methylpentanoate (3-isopropylmalate) to 3-carboxy-4-methyl-2-oxopentanoate. The product decarboxylates to 4-methyl-2 oxopentanoate. The sequence is that of 3-isopropylmalate dehydrogenase from Chlorobium luteolum (strain DSM 273 / BCRC 81028 / 2530) (Pelodictyon luteolum).